The primary structure comprises 777 residues: Acyl-CoA dehydrogenase family member 11 (777 aa).

Residues 501-511 (FCMTEPDVASS), 509-511 (ASS), 535-537 (WSS), and serine 537 each bind FAD. Serine 511 is a substrate binding site. A substrate-binding site is contributed by 626 to 629 (GPGR). FAD contacts are provided by residues arginine 654, glutamine 724, and 724–728 (QVCGG). Glycine 752 contacts substrate. Residues 753-755 (PDE) and glutamate 755 each bind FAD.

It belongs to the acyl-CoA dehydrogenase family. As to quaternary structure, homodimer. The cofactor is FAD.

The protein resides in the peroxisome. It localises to the mitochondrion membrane. The enzyme catalyses a 2,3-saturated acyl-CoA + oxidized [electron-transfer flavoprotein] + H(+) = a (2E)-enoyl-CoA + reduced [electron-transfer flavoprotein]. The catalysed reaction is docosanoyl-CoA + oxidized [electron-transfer flavoprotein] + H(+) = (2E)-docosenoyl-CoA + reduced [electron-transfer flavoprotein]. It catalyses the reaction tetracosanoyl-CoA + oxidized [electron-transfer flavoprotein] + H(+) = (2E)-tetracosenoyl-CoA + reduced [electron-transfer flavoprotein]. It carries out the reaction eicosanoyl-CoA + oxidized [electron-transfer flavoprotein] + H(+) = (2E)-eicosenoyl-CoA + reduced [electron-transfer flavoprotein]. The enzyme catalyses hexacosanoyl-CoA + oxidized [electron-transfer flavoprotein] + H(+) = (2E)-hexacosenoyl-CoA + reduced [electron-transfer flavoprotein]. The catalysed reaction is tricosanoyl-CoA + oxidized [electron-transfer flavoprotein] + H(+) = (2E)-tricosenoyl-CoA + reduced [electron-transfer flavoprotein]. The protein operates within lipid metabolism; fatty acid beta-oxidation. Its function is as follows. Acyl-CoA dehydrogenase, that exhibits maximal activity towards saturated C22-CoA. Probably participates in beta-oxydation and energy production but could also play a role in the metabolism of specific fatty acids to control fatty acids composition of cellular lipids in brain. This is Acyl-CoA dehydrogenase family member 11 (ACAD11) from Gallus gallus (Chicken).